The sequence spans 956 residues: MEKMLVGCLLMLGQLFLVLPVDGRERPQARFPSRGRHVRMYPQTALLESSCENKRADLVFIIDSSRSVNTYDYAKVKEFILDILQFLDIGPDVTRVGLLQYGSTVKNEFSLKTFKRKSEVERAVKRMRHLSTGTMTGLAIQYALNIAFSEAEGARPLRENVPRIIMIVTDGRPQDSVAEVAAKARNTGILIFAIGVGQVDLNTLKAIGSEPHKDHVFLVANFSQIESLTSVFQNKLCTVHMCSVLEHNCAHFCLNTPGSYICKCKQGYILSTDQKTCRIQDLCATEDHGCEQLCVNMLGSFVCQCYSGYTLAEDGKRCTAVDYCASENHGCEHECVNAESSYLCRCHEGFALNSDKKTCSKIDYCASSNHGCQHECVNAQTSALCRCLKGFMLNPDRKTCRRINYCALNKPGCEHECVNTEEGHYCRCRQGYNLDPNGKTCSRVDHCAQQDHGCEQLCLNTEESFVCQCSEGFLINDDLKTCSRADYCLLSNHGCEYSCVNTDKSFACQCPEGHVLRSDGKTCAKLDSCALGDHGCEHSCVSSEDSFVCQCFEGYILRDDGKTCRRKDVCQDVNHGCEHLCVNSGESYVCKCLEGFRLAEDGKRCRRKNVCKSTQHGCEHMCVNNGNSYLCRCSEGFVLAEDGKHCKRCTEGPIDLVFVIDGSKSLGEENFETVKHFVTGIIDSLAVSPKAARVGLLQYSTQVRTEFTLRGFSSAKEMKKAVTHMKYMGKGSMTGLALKHMFERSFTQVEGARPPSTQVPRVAIVFTDGRAQDDVSEWASKAKANGITMYAVGVGKAIEEELQEIASEPIDKHLFYAEDFSTMGEISEKLKEGICEALEDSGGRQDSAAWDLPQQAHQPTEPEPVTIKIKDLLSCSNFAVQHRFLFEEDNLSRSTQKLFHSTKSSGNPLEESQDQCKCENLILFQNVANEEVRKLTQRLEEMTQRMEALENRLKYR.

An N-terminal signal peptide occupies residues 1 to 23 (MEKMLVGCLLMLGQLFLVLPVDG). The region spanning 57-232 (DLVFIIDSSR…SQIESLTSVF (176 aa)) is the VWFA 1 domain. A glycan (N-linked (GlcNAc...) asparagine) is linked at Asn221. 10 consecutive EGF-like domains span residues 238-278 (TVHM…KTCR), 279-319 (IQDL…KRCT), 320-360 (AVDY…KTCS), 361-401 (KIDY…KTCR), 402-442 (RINY…KTCS), 443-483 (RVDH…KTCS), 484-524 (RADY…KTCA), 525-565 (KLDS…KTCR), 566-606 (RKDV…KRCR), and 607-647 (RKNV…KHCK). 30 cysteine pairs are disulfide-bonded: Cys242–Cys253, Cys249–Cys262, Cys264–Cys277, Cys283–Cys294, Cys290–Cys303, Cys305–Cys318, Cys324–Cys335, Cys331–Cys344, Cys346–Cys359, Cys365–Cys376, Cys372–Cys385, Cys387–Cys400, Cys406–Cys417, Cys413–Cys426, Cys428–Cys441, Cys447–Cys458, Cys454–Cys467, Cys469–Cys482, Cys488–Cys499, Cys495–Cys508, Cys510–Cys523, Cys529–Cys540, Cys536–Cys549, Cys551–Cys564, Cys570–Cys581, Cys577–Cys590, Cys592–Cys605, Cys611–Cys622, Cys618–Cys631, and Cys633–Cys646. One can recognise a VWFA 2 domain in the interval 655 to 830 (DLVFVIDGSK…STMGEISEKL (176 aa)). Asn890 carries an N-linked (GlcNAc...) asparagine glycan. Residues 917-955 (KCENLILFQNVANEEVRKLTQRLEEMTQRMEALENRLKY) are a coiled coil.

As to expression, detected in a variety of organs, including calvaria, uterus, heart and brain, as well as fibroblast and osteoblast cell lines.

It localises to the secreted. In terms of biological role, involved in matrix assembly. The protein is Matrilin-2 (Matn2) of Mus musculus (Mouse).